The following is a 491-amino-acid chain: Cytochrome P450 2B3 (491 aa).

Residue C436 participates in heme binding.

Belongs to the cytochrome P450 family. Heme serves as cofactor. In terms of tissue distribution, liver. Not found in the lung, kidney and prostate.

The protein resides in the endoplasmic reticulum membrane. The protein localises to the microsome membrane. It carries out the reaction an organic molecule + reduced [NADPH--hemoprotein reductase] + O2 = an alcohol + oxidized [NADPH--hemoprotein reductase] + H2O + H(+). Functionally, cytochromes P450 are a group of heme-thiolate monooxygenases. In liver microsomes, this enzyme is involved in an NADPH-dependent electron transport pathway. It oxidizes a variety of structurally unrelated compounds, including steroids, fatty acids, and xenobiotics. The sequence is that of Cytochrome P450 2B3 (Cyp2b3) from Rattus norvegicus (Rat).